The sequence spans 555 residues: Probable ferredoxin/ferredoxin--NADP reductase (555 aa).

2 consecutive 4Fe-4S ferredoxin-type domains span residues Pro-2–Asp-29 and Glu-37–Arg-66. Residues Cys-9, Cys-15, Cys-19, Cys-46, Cys-49, Cys-52, and Cys-56 each contribute to the [4Fe-4S] cluster site. The tract at residues Val-115–Ser-555 is ferredoxin--NADP reductase. The FAD site is built by Ala-123, Glu-143, Leu-151, and Ile-187. Residues Arg-213, Asn-258 to Val-261, Arg-302 to Arg-303, and Glu-314 each bind NADP(+). FAD contacts are provided by residues Trp-453 and Gly-460–Ile-462. Gly-460 contacts NADP(+).

This sequence in the C-terminal section; belongs to the ferredoxin--NADP reductase family. [4Fe-4S] cluster serves as cofactor. It depends on FAD as a cofactor.

The catalysed reaction is 2 reduced [2Fe-2S]-[ferredoxin] + NADP(+) + H(+) = 2 oxidized [2Fe-2S]-[ferredoxin] + NADPH. The polypeptide is Probable ferredoxin/ferredoxin--NADP reductase (fprB) (Mycobacterium leprae (strain TN)).